The primary structure comprises 117 residues: Immunoglobulin kappa variable 1D-12 (117 aa).

Positions 1 to 22 are cleaved as a signal peptide; it reads MDMMVPAQLLGLLLLWFPGSRC. Residues 23–45 form a framework-1 region; it reads DIQMTQSPSSVSASVGDRVTITC. An Ig-like domain is found at 24–117; it reads IQMTQSPSSV…YYCQQANSFP (94 aa). Cys45 and Cys110 are joined by a disulfide. The segment at 46–56 is complementarity-determining-1; that stretch reads RASQGISSWLA. The tract at residues 57–71 is framework-2; that stretch reads WYQQKPGKAPKLLIY. The segment at 72-78 is complementarity-determining-2; it reads AASSLQS. The interval 79–110 is framework-3; sequence GVPSRFSGSGSGTDFTLTISSLQPEDFATYYC. The complementarity-determining-3 stretch occupies residues 111 to 117; sequence QQANSFP.

In terms of assembly, immunoglobulins are composed of two identical heavy chains and two identical light chains; disulfide-linked.

It localises to the secreted. It is found in the cell membrane. V region of the variable domain of immunoglobulin light chains that participates in the antigen recognition. Immunoglobulins, also known as antibodies, are membrane-bound or secreted glycoproteins produced by B lymphocytes. In the recognition phase of humoral immunity, the membrane-bound immunoglobulins serve as receptors which, upon binding of a specific antigen, trigger the clonal expansion and differentiation of B lymphocytes into immunoglobulins-secreting plasma cells. Secreted immunoglobulins mediate the effector phase of humoral immunity, which results in the elimination of bound antigens. The antigen binding site is formed by the variable domain of one heavy chain, together with that of its associated light chain. Thus, each immunoglobulin has two antigen binding sites with remarkable affinity for a particular antigen. The variable domains are assembled by a process called V-(D)-J rearrangement and can then be subjected to somatic hypermutations which, after exposure to antigen and selection, allow affinity maturation for a particular antigen. This Homo sapiens (Human) protein is Immunoglobulin kappa variable 1D-12.